Reading from the N-terminus, the 187-residue chain is Accessory gene regulator protein B (187 aa).

5 consecutive transmembrane segments (helical) span residues 49 to 69, 82 to 102, 106 to 126, 144 to 164, and 166 to 186; these read ISIF…YMLI, ILCY…LINI, FTYL…YAPA, VSII…PFYA, and FMLL…FPKE.

The protein belongs to the AgrB family.

It localises to the cell membrane. In terms of biological role, essential for the production of a quorum sensing system signal molecule, the autoinducing peptide (AIP). This quorum sensing system is responsible for the regulation of the expression of virulence factor genes. Involved in the proteolytic processing of AgrD, the precursor of AIP. The protein is Accessory gene regulator protein B of Staphylococcus aureus (strain bovine RF122 / ET3-1).